Consider the following 992-residue polypeptide: Presequence protease, mitochondrial (992 aa).

The transit peptide at 1-30 (MNYAKLSIAFSKKTIKTHNCRLFQRWLHVG) directs the protein to the mitochondrion. A Zn(2+)-binding site is contributed by His91. Glu94 (proton acceptor) is an active-site residue. Position 95 (His95) interacts with Zn(2+). Residue Glu167 is part of the active site. Glu192 lines the Zn(2+) pocket.

This sequence belongs to the peptidase M16 family. PreP subfamily. As to quaternary structure, monomer and homodimer; homodimerization is induced by binding of the substrate. Zn(2+) serves as cofactor.

Its subcellular location is the mitochondrion intermembrane space. The protein localises to the mitochondrion matrix. Its function is as follows. Degrades mitochondrial transit peptides after their cleavage in the intermembrane space or in the matrix, and presequence peptides; clearance of these peptides is required to keep the presequence processing machinery running. Preferentially cleaves the N-terminal side of paired basic amino acid residues. Also degrades other unstructured peptides. May function as an ATP-dependent peptidase as opposed to a metalloendopeptidase. The sequence is that of Presequence protease, mitochondrial (cym1) from Schizosaccharomyces pombe (strain 972 / ATCC 24843) (Fission yeast).